Consider the following 589-residue polypeptide: MTGLLKRKFDQLDEDNSSVSSSSSSSGCQSRSCSPSSSVSRAWDSEEEGPWDQMPLPDRDFCGPRSFTPLSILKRARRERPGRVAFDGITVFYFPRCQGFTSVPSRGGCTLGMALRHSACRRFSLAEFAQEQARARHEKLRQRLKEEKLEMLQWKLSAAGVPQAEAGLPPVVDAIDDASVEEDLAVAVAGGRLEEVSFLQPYPARRRRALLRASGVRRIDREEKRELQALRQSREDCGCHCDRICDPETCSCSLAGIKCQMDHTAFPCGCCREGCENPMGRVEFNQARVQTHFIHTLTRLQLEQEAESFRELEAPAQGSPPSPGEEALVPTFPLAKPPMNNELGDNSCSSDMTDSSTASSSASGTSEAPDCPTHPGLPGPGFQPGVDDDSLARILSFSDSDFGGEEEEEEEGSVGNLDNLSCFHPADIFGTSDPGGLASWTHSYSGCSFTSGVLDENANLDASCFLNGGLEGSREGSLPGTSVPPSMDAGRSSSVDLSLSSCDSFELLQALPDYSLGPHYTSQKVSDSLDNIEAPHFPLPGLSPPGDASSCFLESLMGFSEPAAEALDPFIDSQFEDTVPASLMEPVPV.

2 disordered regions span residues 1-62 (MTGL…RDFC) and 309-388 (FREL…GVDD). Low complexity-rich tracts occupy residues 17–41 (SSVS…SVSR) and 345–368 (DNSC…TSEA).

Belongs to the AXUD1 family. Ubiquitous. Most abundantly expressed in lung, placenta, skeletal muscle, pancreas and leukocyte. Frequently down-regulated in lung, kidney, liver and colon cancers compared with their corresponding normal tissues.

The protein resides in the nucleus. Functionally, binds to the consensus sequence 5'-AGAGTG-3' and has transcriptional activator activity. May have a tumor-suppressor function. May play a role in apoptosis. This Homo sapiens (Human) protein is Cysteine/serine-rich nuclear protein 1 (CSRNP1).